The following is a 712-amino-acid chain: Polyribonucleotide nucleotidyltransferase (712 aa).

Residues aspartate 487 and aspartate 493 each contribute to the Mg(2+) site. The KH domain occupies 554–613; it reads PRIEVMNIPVDKIREVIGSGGKVIREIVEKTGAKINIEDDGTVKIASSSGKEIEAARKWI. Residues 623 to 691 enclose the S1 motif domain; the sequence is GQIYEGTVVK…ERGKVRLSMK (69 aa).

The protein belongs to the polyribonucleotide nucleotidyltransferase family. Mg(2+) serves as cofactor.

The protein localises to the cytoplasm. It carries out the reaction RNA(n+1) + phosphate = RNA(n) + a ribonucleoside 5'-diphosphate. Functionally, involved in mRNA degradation. Catalyzes the phosphorolysis of single-stranded polyribonucleotides processively in the 3'- to 5'-direction. This chain is Polyribonucleotide nucleotidyltransferase, found in Rhizobium etli (strain ATCC 51251 / DSM 11541 / JCM 21823 / NBRC 15573 / CFN 42).